The chain runs to 438 residues: sn-glycerol-3-phosphate-binding periplasmic protein UgpB (438 aa).

An N-terminal signal peptide occupies residues 1 to 23 (MKPLRYTASALALGLALMANAQA). Sn-glycerol 3-phosphate is bound by residues Tyr65, Glu89, Ser144, Ser270, Gly307, Tyr346, and Arg397.

Belongs to the bacterial solute-binding protein 1 family. In terms of assembly, the complex is composed of two ATP-binding proteins (UgpC), two transmembrane proteins (UgpA and UgpE) and a solute-binding protein (UgpB).

The protein resides in the periplasm. Functionally, part of the ABC transporter complex UgpBAEC involved in sn-glycerol-3-phosphate (G3P) import. Binds G3P. This is sn-glycerol-3-phosphate-binding periplasmic protein UgpB (ugpB) from Escherichia coli O1:K1 / APEC.